The following is a 182-amino-acid chain: Large ribosomal subunit protein uL5 (182 aa).

Belongs to the universal ribosomal protein uL5 family. As to quaternary structure, part of the 50S ribosomal subunit; part of the 5S rRNA/L5/L18/L25 subcomplex. Contacts the 5S rRNA and the P site tRNA. Forms a bridge to the 30S subunit in the 70S ribosome.

This is one of the proteins that bind and probably mediate the attachment of the 5S RNA into the large ribosomal subunit, where it forms part of the central protuberance. In the 70S ribosome it contacts protein S13 of the 30S subunit (bridge B1b), connecting the 2 subunits; this bridge is implicated in subunit movement. Contacts the P site tRNA; the 5S rRNA and some of its associated proteins might help stabilize positioning of ribosome-bound tRNAs. The chain is Large ribosomal subunit protein uL5 from Coxiella burnetii (strain CbuK_Q154) (Coxiella burnetii (strain Q154)).